The sequence spans 724 residues: Phosphoribosylformylglycinamidine synthase subunit PurL (724 aa).

Residue His34 is part of the active site. ATP contacts are provided by Tyr37 and Lys75. Glu77 provides a ligand contact to Mg(2+). Substrate is bound by residues 78–81 (SHNH) and Arg100. His79 functions as the Proton acceptor in the catalytic mechanism. Position 101 (Asp101) interacts with Mg(2+). A substrate-binding site is contributed by Gln221. Asp249 contacts Mg(2+). Position 292–294 (292–294 (ESQ)) interacts with substrate. ATP-binding residues include Asp478 and Gly515. Ser518 provides a ligand contact to substrate.

It belongs to the FGAMS family. In terms of assembly, monomer. Part of the FGAM synthase complex composed of 1 PurL, 1 PurQ and 2 PurS subunits.

It localises to the cytoplasm. The enzyme catalyses N(2)-formyl-N(1)-(5-phospho-beta-D-ribosyl)glycinamide + L-glutamine + ATP + H2O = 2-formamido-N(1)-(5-O-phospho-beta-D-ribosyl)acetamidine + L-glutamate + ADP + phosphate + H(+). Its pathway is purine metabolism; IMP biosynthesis via de novo pathway; 5-amino-1-(5-phospho-D-ribosyl)imidazole from N(2)-formyl-N(1)-(5-phospho-D-ribosyl)glycinamide: step 1/2. In terms of biological role, part of the phosphoribosylformylglycinamidine synthase complex involved in the purines biosynthetic pathway. Catalyzes the ATP-dependent conversion of formylglycinamide ribonucleotide (FGAR) and glutamine to yield formylglycinamidine ribonucleotide (FGAM) and glutamate. The FGAM synthase complex is composed of three subunits. PurQ produces an ammonia molecule by converting glutamine to glutamate. PurL transfers the ammonia molecule to FGAR to form FGAM in an ATP-dependent manner. PurS interacts with PurQ and PurL and is thought to assist in the transfer of the ammonia molecule from PurQ to PurL. The protein is Phosphoribosylformylglycinamidine synthase subunit PurL of Caldivirga maquilingensis (strain ATCC 700844 / DSM 13496 / JCM 10307 / IC-167).